A 212-amino-acid polypeptide reads, in one-letter code: Glycerol-3-phosphate acyltransferase (212 aa).

The next 6 helical transmembrane spans lie at 8 to 28 (IFLS…PFAV), 59 to 79 (AAAA…LWLA), 90 to 110 (VFAL…FLGF), 122 to 142 (ILLA…VIIA), 148 to 168 (SSLA…FGSG), and 169 to 189 (VAWY…LLLF).

This sequence belongs to the PlsY family. Probably interacts with PlsX.

Its subcellular location is the cell inner membrane. It carries out the reaction an acyl phosphate + sn-glycerol 3-phosphate = a 1-acyl-sn-glycero-3-phosphate + phosphate. It functions in the pathway lipid metabolism; phospholipid metabolism. Catalyzes the transfer of an acyl group from acyl-phosphate (acyl-PO(4)) to glycerol-3-phosphate (G3P) to form lysophosphatidic acid (LPA). This enzyme utilizes acyl-phosphate as fatty acyl donor, but not acyl-CoA or acyl-ACP. This chain is Glycerol-3-phosphate acyltransferase, found in Bordetella petrii (strain ATCC BAA-461 / DSM 12804 / CCUG 43448).